The chain runs to 163 residues: General stress protein 16O (163 aa).

Positions 19–30 (QKELSGEKKETE) are enriched in basic and acidic residues. 2 disordered regions span residues 19–55 (QKEL…TLVT) and 115–163 (ADVE…QDSK). Residues 89–123 (CEKTGQEIPYERLEAVPYARMTVEAQADVEDDLET) form a dksA C4-type; degenerate zinc finger. Basic and acidic residues predominate over residues 127-146 (SYEREFHEQVKDLSNKETID).

In Bacillus subtilis (strain 168), this protein is General stress protein 16O (yocK).